A 799-amino-acid chain; its full sequence is Ribosome-releasing factor 2, mitochondrial (799 aa).

Positions 19–306 (SKIRNIGIIA…AVVNYLPSPL (288 aa)) constitute a tr-type G domain. GTP is bound by residues 28–35 (AHIDAGKT), 93–97 (DTPGH), and 145–148 (NKMD).

This sequence belongs to the TRAFAC class translation factor GTPase superfamily. Classic translation factor GTPase family. EF-G/EF-2 subfamily.

The protein resides in the mitochondrion. Functionally, mitochondrial GTPase that mediates the disassembly of ribosomes from messenger RNA at the termination of mitochondrial protein biosynthesis. Not involved in the GTP-dependent ribosomal translocation step during translation elongation. This is Ribosome-releasing factor 2, mitochondrial from Vanderwaltozyma polyspora (strain ATCC 22028 / DSM 70294 / BCRC 21397 / CBS 2163 / NBRC 10782 / NRRL Y-8283 / UCD 57-17) (Kluyveromyces polysporus).